Reading from the N-terminus, the 54-residue chain is Large ribosomal subunit protein bL33 (54 aa).

Belongs to the bacterial ribosomal protein bL33 family.

This chain is Large ribosomal subunit protein bL33, found in Rhodopirellula baltica (strain DSM 10527 / NCIMB 13988 / SH1).